The sequence spans 273 residues: Urease accessory protein UreD (273 aa).

It belongs to the UreD family. As to quaternary structure, ureD, UreF and UreG form a complex that acts as a GTP-hydrolysis-dependent molecular chaperone, activating the urease apoprotein by helping to assemble the nickel containing metallocenter of UreC. The UreE protein probably delivers the nickel.

The protein resides in the cytoplasm. In terms of biological role, required for maturation of urease via the functional incorporation of the urease nickel metallocenter. The protein is Urease accessory protein UreD of Rhizobium johnstonii (strain DSM 114642 / LMG 32736 / 3841) (Rhizobium leguminosarum bv. viciae).